The primary structure comprises 341 residues: tRNA N6-adenosine threonylcarbamoyltransferase (341 aa).

2 residues coordinate Fe cation: His-113 and His-117. Substrate is bound by residues 136 to 140 (IISGG), Asp-169, Gly-182, and Asn-280. Asp-308 provides a ligand contact to Fe cation.

The protein belongs to the KAE1 / TsaD family. The cofactor is Fe(2+).

The protein localises to the cytoplasm. The catalysed reaction is L-threonylcarbamoyladenylate + adenosine(37) in tRNA = N(6)-L-threonylcarbamoyladenosine(37) in tRNA + AMP + H(+). Its function is as follows. Required for the formation of a threonylcarbamoyl group on adenosine at position 37 (t(6)A37) in tRNAs that read codons beginning with adenine. Is involved in the transfer of the threonylcarbamoyl moiety of threonylcarbamoyl-AMP (TC-AMP) to the N6 group of A37, together with TsaE and TsaB. TsaD likely plays a direct catalytic role in this reaction. In Anaplasma marginale (strain St. Maries), this protein is tRNA N6-adenosine threonylcarbamoyltransferase.